Reading from the N-terminus, the 1368-residue chain is MAP3K epsilon protein kinase 1 (1368 aa).

Positions 20-274 (YMLGDEIGKG…AKTLLSHPWI (255 aa)) constitute a Protein kinase domain. HEAT repeat units follow at residues 25 to 62 (EIGK…EDLN) and 86 to 125 (SKTK…AVYI). ATP is bound by residues 26–34 (IGKGAYGRV) and K49. D144 functions as the Proton acceptor in the catalytic mechanism. Residues 218–256 (PYYDLQPMPALFRIVQDDNPPIPDSLSPDITDFLRQCFK) form an HEAT 3 repeat. Disordered regions lie at residues 296-415 (EATA…KNTS) and 430-507 (QTSH…PVAD). Residues 351 to 364 (LGEEGTDNSEDDIM) show a composition bias toward acidic residues. Composition is skewed to basic and acidic residues over residues 388–399 (SDFHGKSERGET) and 470–486 (SLHD…EGKP). The segment covering 488-502 (EASTSMPTSNVNQGD) has biased composition (polar residues). HEAT repeat units follow at residues 533–571 (SNDG…LFPL), 628–653 (IPKS…DFQE), 654–695 (NACL…SSPL), 699–737 (MFIA…VFKL), and 750–788 (AAKN…RVRS). The segment at 777–883 (GGLDGQAPRV…ISLSANRTST (107 aa)) is disordered. The span at 791 to 808 (LDPNNPIFGQNETSSLSM) shows a compositional bias: polar residues. Basic and acidic residues-rich tracts occupy residues 813 to 826 (DVLK…EEPS) and 836 to 852 (SDVH…DKPR). HEAT repeat units follow at residues 903-940 (EQVR…HESR), 1025-1063 (ATSS…ADTT), 1067-1105 (YMCS…DPNC), 1112-1150 (ADAI…INKR), 1154-1191 (QAAE…ASRN), 1196-1234 (LRAH…DNRK), 1258-1281 (RHFV…NKTL), 1282-1318 (AVNG…HHPR), and 1348-1368 (QVLV…NTIL).

Belongs to the protein kinase superfamily. Ser/Thr protein kinase family. Interacts with SGP1. Autophosphorylated. Expressed in both the sporophytic and the gametophytic tissues, especially in dividing cells. Mostly present in flower buds and mature flowers. Also accumulates in embryos, in roots apices, trichomes and ovule integuments.

The protein localises to the cytoplasm. It localises to the cytoskeleton. The protein resides in the microtubule organizing center. Its subcellular location is the nucleus. It is found in the nucleolus. The protein localises to the cell membrane. The enzyme catalyses L-seryl-[protein] + ATP = O-phospho-L-seryl-[protein] + ADP + H(+). It catalyses the reaction L-threonyl-[protein] + ATP = O-phospho-L-threonyl-[protein] + ADP + H(+). In terms of biological role, serine/threonine-protein kinase involved in the spatial and temporal control system organizing cortical activities in mitotic and postmitotic cells. Required for the normal functioning of the plasma membrane in developing pollen. Involved in the regulation of cell expansion, cell elongation, and embryo development. The sequence is that of MAP3K epsilon protein kinase 1 from Arabidopsis thaliana (Mouse-ear cress).